The primary structure comprises 343 residues: Dipeptide transport system permease protein DppC (343 aa).

The next 5 membrane-spanning stretches (helical) occupy residues Leu44–Val64, Leu144–Ile164, Leu195–Trp215, Gly259–Leu279, and Phe309–Gly329. In terms of domain architecture, ABC transmembrane type-1 spans Leu140–Gly329.

Belongs to the binding-protein-dependent transport system permease family. OppBC subfamily. The complex is composed of two ATP-binding proteins (DppD and DppF), two transmembrane proteins (DppB and DppC) and a solute-binding protein (DppA).

It is found in the cell membrane. In terms of biological role, part of the ABC transporter DppABCDF involved in dipeptide transport. Responsible for the translocation of the substrate across the membrane. The sequence is that of Dipeptide transport system permease protein DppC from Lactococcus lactis subsp. cremoris (strain MG1363).